A 361-amino-acid polypeptide reads, in one-letter code: Probable mannose-1-phosphate guanylyltransferase 2 (361 aa).

2 residues coordinate GDP-alpha-D-mannose: Leu6 and Val7. Positions 9, 11, 12, 13, and 23 each coordinate diphosphate. GDP-alpha-D-mannose-binding residues include Gly85, Asn109, Asp111, Gly146, and Asn173.

The protein belongs to the transferase hexapeptide repeat family.

It carries out the reaction alpha-D-mannose 1-phosphate + GTP + H(+) = GDP-alpha-D-mannose + diphosphate. The protein operates within nucleotide-sugar biosynthesis; GDP-alpha-D-mannose biosynthesis; GDP-alpha-D-mannose from alpha-D-mannose 1-phosphate (GTP route): step 1/1. Catalyzes a reaction of the Smirnoff-Wheeler pathway, the major route to ascorbate biosynthesis in plants. This chain is Probable mannose-1-phosphate guanylyltransferase 2, found in Oryza sativa subsp. japonica (Rice).